The sequence spans 544 residues: Chaperonin GroEL 2 (544 aa).

ATP is bound by residues 29 to 32 (TLGP), 86 to 90 (DGTTT), G413, 479 to 481 (NAA), and D495.

This sequence belongs to the chaperonin (HSP60) family. Forms a cylinder of 14 subunits composed of two heptameric rings stacked back-to-back. Interacts with the co-chaperonin GroES.

It is found in the cytoplasm. It catalyses the reaction ATP + H2O + a folded polypeptide = ADP + phosphate + an unfolded polypeptide.. Functionally, together with its co-chaperonin GroES, plays an essential role in assisting protein folding. The GroEL-GroES system forms a nano-cage that allows encapsulation of the non-native substrate proteins and provides a physical environment optimized to promote and accelerate protein folding. This is Chaperonin GroEL 2 from Prochlorococcus marinus subsp. pastoris (strain CCMP1986 / NIES-2087 / MED4).